Consider the following 506-residue polypeptide: COP9 signalosome complex subunit 2 (506 aa).

The 169-residue stretch at Ser-252–Asp-420 folds into the PCI domain. Basic residues predominate over residues Ser-482–Lys-491. Positions Ser-482–Phe-506 are disordered. Over residues Gly-492–Phe-506 the composition is skewed to gly residues.

This sequence belongs to the CSN2 family. Component of the COP9 signalosome (CSN) complex.

The protein localises to the cytoplasm. Its subcellular location is the nucleus. Its function is as follows. Component of the COP9 signalosome (CSN) complex that acts as an regulator of the ubiquitin (Ubl) conjugation pathway by mediating the deneddylation of the cullin subunit of SCF-type E3 ubiquitin-protein ligase complexes. The CSN complex seems to link protein degradation to sexual development. Required for fruit body formation. The polypeptide is COP9 signalosome complex subunit 2 (csnB) (Emericella nidulans (strain FGSC A4 / ATCC 38163 / CBS 112.46 / NRRL 194 / M139) (Aspergillus nidulans)).